The primary structure comprises 479 residues: GDP-fucose protein O-fucosyltransferase 3 (479 aa).

Over 1–8 the chain is Cytoplasmic; that stretch reads MVRIQRRK. A helical; Signal-anchor for type II membrane protein membrane pass occupies residues 9 to 31; the sequence is LLASCLCVTATVFLLVTLQVMVE. At 32-479 the chain is on the lumenal side; sequence LGKFERKEFK…QEFWGLVFKD (448 aa). Asn110 and Asn168 each carry an N-linked (GlcNAc...) asparagine glycan. A disulfide bridge links Cys389 with Cys392.

This sequence belongs to the glycosyltransferase 10 family. Expressed in lung, digestive tract, gall bladder, placenta, kidney, uterus and brain. Not detected in spleen, heart, muscle, liver and pancreas.

It is found in the endoplasmic reticulum membrane. The protein localises to the golgi apparatus membrane. The protein resides in the golgi apparatus. It localises to the lysosome. It catalyses the reaction L-threonyl-[protein] + GDP-beta-L-fucose = 3-O-(alpha-L-fucosyl)-L-threonyl-[protein] + GDP + H(+). It carries out the reaction L-seryl-[protein] + GDP-beta-L-fucose = 3-O-(alpha-L-fucosyl)-L-seryl-[protein] + GDP + H(+). It participates in protein modification; protein glycosylation. Its function is as follows. Protein O-fucosyltransferase that specifically catalyzes O-fucosylation of serine or threonine residues in EMI domains of target proteins, such as MMRN1, MMRN2 and EMID1. Attaches fucose through an O-glycosidic linkage. O-fucosylation of EMI domain-containing proteins may be required for facilitating protein folding and secretion. May also show alpha-(1,3)-fucosyltransferase activity toward the innermost N-acetyl glucosamine (GlcNAc) residue in biantennary N-glycan acceptors. However, this was tested with a library of synthetic substrates and this activity is unsure in vivo. May be involved in biosynthesis of Lewis X-carrying biantennary N-glycans that regulate neuron stem cell self-renewal during brain development. The chain is GDP-fucose protein O-fucosyltransferase 3 from Homo sapiens (Human).